A 434-amino-acid polypeptide reads, in one-letter code: MGRVQLFEIRLSQGRVVYSPGEPLAGAVHLRLGAPLPFRAIRVTCMGSCGVSNKANDGAWVVEESYFNSSLSLADKGSLPPGEHNFPFQFLLPATAPTSFEGPFGKIVHQVRASIDTPRFSKDHKCSLVFYILSPLNLNSIPDIEQPNVASTTKKFSYKLVKTGSVVLTASTDLRGYVVGQVLRLQADIENQSGKDTSPVVASLLQKVSYKAKRWIYDVRTIAEVEGTGVKAWRHAQWQEQILVPALPQSALPGCSLIHIDYYLQVSMKAPEATVTLPLFVGNIAVNQTPLSPCPGPGSSPGLLSPVVPSAPPQEEAEAVASGPHFSDPVSLSTKSHSQQQPLSTTLGSVSVTTIEPCVQVGSPARHSLHPPLCISIGATVPYFAEGSGGPVPTTSALILPPEYSSWGYPYEAPPSYEQSCGAGGTDVGLIPGS.

Residues 295–345 are disordered; sequence PGPGSSPGLLSPVVPSAPPQEEAEAVASGPHFSDPVSLSTKSHSQQQPLST. Polar residues predominate over residues 330–342; that stretch reads VSLSTKSHSQQQP. 2 consecutive short sequence motifs (PPxY motif) follow at residues 401–404 and 414–417; these read PPEY and PPSY.

It belongs to the arrestin family. In terms of assembly, interacts (via PPxY motifs) with ITCH (via WW domains); the interaction is direct and participates in the recruitment of the ubiquitin-protein ligase ITCH to the NOTCH1 receptor. Interacts with ARRB1 and ARRB2; the interaction is direct. Interacts with TSG101; may recruit TSG101 to the plasma membrane. Interacts (via PPxY motifs) with WWP2 (via WW domains); ubiquitinates ARRDC1. Interacts with SLC11A2; controls the incorporation of SLC11A2 into extracellular vesicles through an ubiquitination-dependent mechanism. Interacts with WWP1 (via WW domains). Interacts with NEDD4 (via WW domains). Interacts with PDCD6IP. In terms of processing, ubiquitinated. Ubiquitination by WWP2; promotes localization to extracellular microvesicles. Ubiquitinated by WWP1.

It localises to the cell membrane. In terms of biological role, functions as an adapter recruiting ubiquitin-protein ligases to their specific substrates. Through an ubiquitination-dependent mechanism plays for instance a role in the incorporation of SLC11A2 into extracellular vesicles. More generally, plays a role in the extracellular transport of proteins between cells through the release in the extracellular space of microvesicles. By participating in the ITCH-mediated ubiquitination and subsequent degradation of NOTCH1, negatively regulates the NOTCH signaling pathway. In Rattus norvegicus (Rat), this protein is Arrestin domain-containing protein 1.